Consider the following 145-residue polypeptide: uncharacterized protein (145 aa).

This is an uncharacterized protein from Synechocystis sp. (strain ATCC 27184 / PCC 6803 / Kazusa).